The chain runs to 380 residues: NADPH oxidoreductase (380 aa).

The FAD-binding FR-type domain maps to 58–164; the sequence is ARELRGRILG…AAPQGNFVLP (107 aa). In terms of domain architecture, 2Fe-2S ferredoxin-type spans 299-380; sequence GTVTFARSGK…AASGDCVLDI (82 aa). Residues C333, C338, C341, and C368 each coordinate [2Fe-2S] cluster.

Interacts with DesA3 to form a functional acyl-CoA desaturase complex. The cofactor is [2Fe-2S] cluster. FAD serves as cofactor.

Its subcellular location is the cell membrane. It participates in lipid metabolism; fatty acid metabolism. Functionally, is likely involved in the aerobic desaturation system responsible for the synthesis of oleic acid from stearoyl-CoA; oleic acid is a precursor of mycobacterial membrane phospholipids and triglycerides. Is the electron transfer partner for the stearoyl-CoA 9-desaturase DesA3. Catalyzes electron transfer reaction between NADPH and the diiron center of DesA3. Cannot use NADH. In Mycobacterium tuberculosis (strain ATCC 25618 / H37Rv), this protein is NADPH oxidoreductase.